The following is a 260-amino-acid chain: Carbonic anhydrase 2 (260 aa).

In terms of domain architecture, Alpha-carbonic anhydrase spans 3 to 259; that stretch reads HGWGYADHNG…LKDRKVCASF (257 aa). Catalysis depends on His64, which acts as the Proton donor/acceptor. Zn(2+) is bound by residues His94, His96, and His119. 198-199 serves as a coordination point for substrate; the sequence is TT.

This sequence belongs to the alpha-carbonic anhydrase family. Requires Zn(2+) as cofactor.

Its subcellular location is the cytoplasm. It carries out the reaction hydrogencarbonate + H(+) = CO2 + H2O. Functionally, catalyzes the reversible hydration of carbon dioxide. The sequence is that of Carbonic anhydrase 2 (ca2) from Pseudaspius hakonensis (Big-scaled redfin).